The chain runs to 1099 residues: Exonuclease/helicase subunit RexB (1099 aa).

[4Fe-4S] cluster-binding residues include C766, C1056, C1059, and C1065.

The protein belongs to the helicase family. AddB/RexB type 2 subfamily. In terms of assembly, heterodimer of RexA (AddA) and RexB. It depends on Mg(2+) as a cofactor. The cofactor is [4Fe-4S] cluster.

Its function is as follows. The heterodimer acts both as an ATP-dependent DNA helicase and an ATP-dependent, dual-direction single-stranded exonuclease. Recognizes the L.lactis chi site (5'-GCGCGTG-3'), which stimulates homologous recombination. This subunit has 5'-&gt;3' exonuclease activity. Functionally, the heterodimer acts as both an ATP-dependent DNA helicase and an ATP-dependent, dual-direction single-stranded exonuclease. Recognizes the chi site generating a DNA molecule suitable for the initiation of homologous recombination. This subunit has 5' -&gt; 3' nuclease activity but not helicase activity. The sequence is that of Exonuclease/helicase subunit RexB from Lactococcus lactis subsp. cremoris (strain MG1363).